Reading from the N-terminus, the 572-residue chain is Putative carbohydrate transport ATP-binding protein MPN_258 (572 aa).

2 consecutive ABC transporter domains span residues 6 to 253 (FRME…MGKE) and 327 to 572 (RFIR…LIMQ). An ATP-binding site is contributed by 40–47 (GENGAGKS).

This sequence belongs to the ABC transporter superfamily.

Its subcellular location is the cell membrane. Its function is as follows. Part of the ABC transporter complex involved in carbohydrates import. Probably responsible for energy coupling to the transport system. This Mycoplasma pneumoniae (strain ATCC 29342 / M129 / Subtype 1) (Mycoplasmoides pneumoniae) protein is Putative carbohydrate transport ATP-binding protein MPN_258.